A 737-amino-acid polypeptide reads, in one-letter code: Procollagen-lysine,2-oxoglutarate 5-dioxygenase 2 (737 aa).

The signal sequence occupies residues 1–25; sequence MGDRGARPGRLMPMLALLSWAAGLG. N-linked (GlcNAc...) asparagine glycosylation is found at asparagine 63 and asparagine 209. At threonine 320 the chain carries Phosphothreonine. Position 323 is a phosphotyrosine (tyrosine 323). Residues asparagine 365 and asparagine 522 are each glycosylated (N-linked (GlcNAc...) asparagine). Positions 644 to 737 constitute a Fe2OG dioxygenase domain; that stretch reads KGFALLNFVV…RYIAVSFIDP (94 aa). 2 residues coordinate Fe cation: histidine 666 and aspartate 668. Asparagine 696 carries an N-linked (GlcNAc...) asparagine glycan. At lysine 704 the chain carries N6-succinyllysine. Fe cation is bound at residue histidine 718. N-linked (GlcNAc...) asparagine glycosylation is present at asparagine 725. Arginine 728 is a catalytic residue.

As to quaternary structure, homodimer. Requires Fe(2+) as cofactor. L-ascorbate is required as a cofactor. As to expression, is highly expressed in the heart, lung, kidney, eye, ovary and placenta.

It is found in the rough endoplasmic reticulum membrane. The catalysed reaction is L-lysyl-[collagen] + 2-oxoglutarate + O2 = (5R)-5-hydroxy-L-lysyl-[collagen] + succinate + CO2. In terms of biological role, forms hydroxylysine residues in -Xaa-Lys-Gly- sequences in collagens. These hydroxylysines serve as sites of attachment for carbohydrate units and are essential for the stability of the intermolecular collagen cross-links. The protein is Procollagen-lysine,2-oxoglutarate 5-dioxygenase 2 (Plod2) of Mus musculus (Mouse).